The primary structure comprises 898 residues: DNA mismatch repair protein MutS (898 aa).

G646–S653 is a binding site for ATP.

This sequence belongs to the DNA mismatch repair MutS family.

This protein is involved in the repair of mismatches in DNA. It is possible that it carries out the mismatch recognition step. This protein has a weak ATPase activity. The sequence is that of DNA mismatch repair protein MutS from Brucella ovis (strain ATCC 25840 / 63/290 / NCTC 10512).